We begin with the raw amino-acid sequence, 380 residues long: D-threo-3-hydroxyaspartate dehydratase (380 aa).

Lysine 43 is modified (N6-(pyridoxal phosphate)lysine).

This sequence belongs to the DSD1 family. Monomer. The cofactor is pyridoxal 5'-phosphate. Mn(2+) serves as cofactor. It depends on Co(2+) as a cofactor. Requires Ni(2+) as cofactor.

The enzyme catalyses (3R)-3-hydroxy-D-aspartate = oxaloacetate + NH4(+). Its activity is regulated as follows. Strongly inhibited by hydroxylamine. Modestly inhibited by EDTA. Functionally, catalyzes the deamination of D-threo-3-hydroxyaspartate (D-THA). Also exhibits dehydratase activity towards L-threo-3-hydroxyaspartate (L-THA), L-erythro-3-hydroxyaspartate (L-EHA) and D-serine. This chain is D-threo-3-hydroxyaspartate dehydratase (dthadh), found in Delftia sp. (strain HT23).